A 1167-amino-acid chain; its full sequence is Phenyloxazoline synthase MbtB (1167 aa).

In terms of domain architecture, Carrier 1 spans 2-78; it reads EAVVTSSQTV…AWTRLVGERT (77 aa). Ser39 carries the O-(pantetheine 4'-phosphoryl)serine modification. The interval 78–100 is disordered; sequence TAESPGAATQSGDTAASAGDPDA. A condensation/cyclization region spans residues 98–390; sequence PDAPFPLAPI…SSLMLDVDFT (293 aa). The segment at 575–967 is adenylation; that stretch reads TYAELRERVL…RIAGVEAAVA (393 aa). In terms of domain architecture, Carrier 2 spans 1054-1130; it reads VPSTALERAL…ALARRLVDHE (77 aa). Ser1089 is modified (O-(pantetheine 4'-phosphoryl)serine).

This sequence belongs to the ATP-dependent AMP-binding enzyme family. MbtB subfamily. The cofactor is pantetheine 4'-phosphate. 4'-phosphopantetheine is transferred from CoA to a specific serine in each of the two carrier protein domains, leading to their activation from apo to holo forms.

It functions in the pathway siderophore biosynthesis; mycobactin biosynthesis. Its function is as follows. Involved in the initial steps of the mycobactin biosynthetic pathway. Putatively couples activated salicylic acid with serine or threonine and cyclizes this precursor to the hydroxyphenyloxazoline ring system present in this class of siderophores. This chain is Phenyloxazoline synthase MbtB (mbtB), found in Mycobacterium sp. (strain MCS).